A 493-amino-acid polypeptide reads, in one-letter code: MALQFTLNQDAPASAHVDCIVVGAFADKTLSPAAQALDSASQGRLTALVARGDVATKTGTTSLVHDLPGVQAPRVLVVGLGDAAKFGVAPYLKAIGDAARALKTGPIGTALLTLTELPVKARDAAWNIRQAVIVSDHAAYRYTATLGKKKVDDTGLTTLAIAGDDARALAVGIATAEGVEFARELGNLPPNYCTPAYLAETAAAFAGKFPGAEAEILDEQQMEALGMGSLLSVARGSANRPRLIVLKWNGGGEARPYVLVGKGITFDTGGVNLKTQGGIEEMKYDMCGGANVIGTFVATVKAELPINLVVVVPAVENAIDGNAYRPSDVITSMSGKTIEVGNTDAEGRLILCDALTYAERFNPEALVDVATLTGACMVALGHQTAGLMSKHDDLANELLAAGEHVFDRAWRLPLWDEYQGLLDSTFADVYNIGGRWGGAITAGCFLSRFTENQRWAHLDIAGVASDEGKRGMATGRPVGLLTQWLLDRAEGGN.

Residues Lys-262 and Asp-267 each contribute to the Mn(2+) site. Lys-274 is a catalytic residue. Positions 285, 344, and 346 each coordinate Mn(2+). The active site involves Arg-348.

Belongs to the peptidase M17 family. The cofactor is Mn(2+).

The protein resides in the cytoplasm. The enzyme catalyses Release of an N-terminal amino acid, Xaa-|-Yaa-, in which Xaa is preferably Leu, but may be other amino acids including Pro although not Arg or Lys, and Yaa may be Pro. Amino acid amides and methyl esters are also readily hydrolyzed, but rates on arylamides are exceedingly low.. It catalyses the reaction Release of an N-terminal amino acid, preferentially leucine, but not glutamic or aspartic acids.. In terms of biological role, presumably involved in the processing and regular turnover of intracellular proteins. Catalyzes the removal of unsubstituted N-terminal amino acids from various peptides. The protein is Probable cytosol aminopeptidase of Xanthomonas campestris pv. campestris (strain 8004).